Consider the following 552-residue polypeptide: Probable ABC transporter ATP-binding/permease protein HI_0664 (552 aa).

Transmembrane regions (helical) follow at residues 22-42 (IMAFTITMGTLGFLAAIFIMV), 52-72 (LNFDTHLSFSGILTALIVLAV), 139-159 (IAPIMIAFFTSAILLLVFAQL), 162-182 (WFVLVALAAYLTVGVILPIIT), 253-273 (EVAVSVFNIIMLFTGLILFSL), and 278-298 (FAAFLIGVILLMSSYGPVIAL). Residues 23 to 307 (MAFTITMGTL…LSNLSSNLLQ (285 aa)) enclose the ABC transmembrane type-1 domain. Positions 340–552 (IDVENVNFAY…VIGIENGRMS (213 aa)) constitute an ABC transporter domain. 372–379 (GRSGSGKS) is an ATP binding site.

This sequence belongs to the ABC transporter superfamily. Lipid exporter (TC 3.A.1.106) family.

The protein resides in the cell inner membrane. This is Probable ABC transporter ATP-binding/permease protein HI_0664 from Haemophilus influenzae (strain ATCC 51907 / DSM 11121 / KW20 / Rd).